The chain runs to 444 residues: UDP-N-acetylmuramate--L-alanine ligase (444 aa).

An ATP-binding site is contributed by 110–116 (GAHGKTS).

The protein belongs to the MurCDEF family.

It localises to the cytoplasm. The catalysed reaction is UDP-N-acetyl-alpha-D-muramate + L-alanine + ATP = UDP-N-acetyl-alpha-D-muramoyl-L-alanine + ADP + phosphate + H(+). The protein operates within cell wall biogenesis; peptidoglycan biosynthesis. Cell wall formation. This Streptococcus pneumoniae (strain JJA) protein is UDP-N-acetylmuramate--L-alanine ligase.